The chain runs to 338 residues: Fructose-1,6-bisphosphatase class 1 1 (338 aa).

Mg(2+) is bound by residues E91, D113, L115, and D116. Substrate contacts are provided by residues 116–119 (DGSS), N208, and K274. E280 contributes to the Mg(2+) binding site.

This sequence belongs to the FBPase class 1 family. Homotetramer. The cofactor is Mg(2+).

The protein resides in the cytoplasm. The catalysed reaction is beta-D-fructose 1,6-bisphosphate + H2O = beta-D-fructose 6-phosphate + phosphate. It participates in carbohydrate biosynthesis; gluconeogenesis. The protein is Fructose-1,6-bisphosphatase class 1 1 of Cupriavidus metallidurans (strain ATCC 43123 / DSM 2839 / NBRC 102507 / CH34) (Ralstonia metallidurans).